The following is a 510-amino-acid chain: Anaerobic nitric oxide reductase transcription regulator NorR (510 aa).

In terms of domain architecture, Sigma-54 factor interaction spans 188–417 (IIGNSQGMRT…LEHVIKRAAV (230 aa)). ATP contacts are provided by residues 216 to 223 (GETGVGKE) and 279 to 288 (ADGGTLFLDE). A DNA-binding region (H-T-H motif) is located at residues 486 to 505 (WAATARQLELDSGNLHRLAK).

It participates in nitrogen metabolism; nitric oxide reduction. In terms of biological role, required for the expression of anaerobic nitric oxide (NO) reductase, acts as a transcriptional activator for at least the norVW operon. Activation also requires sigma-54. The sequence is that of Anaerobic nitric oxide reductase transcription regulator NorR from Vibrio vulnificus (strain CMCP6).